The sequence spans 397 residues: Heterogeneous nuclear ribonucleoprotein K homolog (397 aa).

Residues 1-41 are disordered; that stretch reads MMIKVGAAINGTDSPKAMKREHDNDDGDRTGRHKRPKTDGF. The span at 16–30 shows a compositional bias: basic and acidic residues; the sequence is KAMKREHDNDDGDRT. KH domains lie at 49–111 and 124–189; these read KFEV…LKDV and PCEV…IEEV. The disordered stretch occupies residues 220–279; sequence GGFPGNMPAGGPPNNRGPAPQRGGQGPPGGPRSYGGAITQGGGQRSFEAGDFQQFRGGPG. A compositionally biased stretch (low complexity) spans 224 to 241; it reads GNMPAGGPPNNRGPAPQR. A KH 3 domain is found at 316–379; the sequence is VTTAQVTIPS…QQIHSAQYLL (64 aa).

Interacts with alg-1; the interaction is direct and may be strengthened through RNA-protein association. As to expression, expressed in gut, muscle, neuronal and hypodermal tissues. Highly expressed in the germline and oocytes.

Its subcellular location is the nucleus. It is found in the cytoplasm. Functionally, RNA-binding protein which functions together with alg-1, a component of the miRNA loading complex, to modulate the processing and activity of specific miRNAs such as miR-58 and let-7 to regulate gene expression at the post-transcriptional level during embryonic, hypodermal and neuronal development. Promotes the lsy-6-mediated repression of cog-1 in uterine cells. In embryos, may play a role in the DNA damage response. The protein is Heterogeneous nuclear ribonucleoprotein K homolog of Caenorhabditis elegans.